The chain runs to 738 residues: DNA repair and recombination protein RAD54-like (738 aa).

A disordered region spans residues 1 to 31 (MRRSLAPSQVAKRKQGPDSDDEEDWEPDMEP). Positions 18–29 (DSDDEEDWEPDM) are enriched in acidic residues. Positions 164 to 339 (GRRIENSYGC…FSLVHFVNSG (176 aa)) constitute a Helicase ATP-binding domain. Residue 177–184 (DEMGLGKT) coordinates ATP. Residues 290–293 (DEGH) carry the DEAH box motif. Positions 493–647 (LVLDYILAMT…CVVDEEQDVE (155 aa)) constitute a Helicase C-terminal domain. 2 positions are modified to phosphoserine: Ser566 and Ser567.

As to quaternary structure, homohexamer. Interacts with RAD51. Post-translationally, phosphorylated. Phosphorylations at Ser-566 and Ser-567 allow efficient removal of RAD51 filaments from DNA.

It carries out the reaction ATP + H2O = ADP + phosphate + H(+). In terms of biological role, plays an essential role in homologous recombination (HR) which is a major pathway for repairing DNA double-strand breaks (DSBs), single-stranded DNA (ssDNA) gaps, and stalled or collapsed replication forks. Acts as a molecular motor during the homology search and guides RAD51 ssDNA along a donor dsDNA thereby changing the homology search from the diffusion-based mechanism to a motor-guided mechanism. Also plays an essential role in RAD51-mediated synaptic complex formation which consists of three strands encased in a protein filament formed once homology is recognized. Once DNA strand exchange occured, dissociates RAD51 from nucleoprotein filaments formed on dsDNA. This chain is DNA repair and recombination protein RAD54-like (rad54l), found in Danio rerio (Zebrafish).